Here is a 282-residue protein sequence, read N- to C-terminus: Undecaprenyl-diphosphatase (282 aa).

The next 7 helical transmembrane spans lie at 1 to 21 (MTLF…FLPV), 40 to 60 (GAAF…IYFY), 85 to 105 (AAMG…GLLF), 117 to 137 (YWVS…EWSV), 196 to 216 (FSFL…LYHT), 229 to 249 (AITA…AFLI), and 258 to 278 (SIFI…IAAG).

This sequence belongs to the UppP family.

Its subcellular location is the cell inner membrane. The catalysed reaction is di-trans,octa-cis-undecaprenyl diphosphate + H2O = di-trans,octa-cis-undecaprenyl phosphate + phosphate + H(+). Catalyzes the dephosphorylation of undecaprenyl diphosphate (UPP). Confers resistance to bacitracin. This Chlorobium phaeobacteroides (strain DSM 266 / SMG 266 / 2430) protein is Undecaprenyl-diphosphatase.